Consider the following 248-residue polypeptide: DNA repair protein RecO (248 aa).

It belongs to the RecO family.

Functionally, involved in DNA repair and RecF pathway recombination. This chain is DNA repair protein RecO, found in Bacillus cereus (strain B4264).